The primary structure comprises 110 residues: MTELMRIAALFAATALAEIVGCYLPWLVLKEGRPVWLLVPAALSLALFAWLLTLHPSAAGRTYAAYGGVYIAVALVWLRVVDGVALTRWDVAGAVLALGGMAVIALQPRA.

4 consecutive transmembrane segments (helical) span residues 9–29 (ALFA…WLVL), 34–54 (PVWL…LLTL), 66–86 (YGGV…GVAL), and 88–108 (RWDV…ALQP).

It belongs to the UPF0060 family.

It is found in the cell inner membrane. The sequence is that of UPF0060 membrane protein Bcep18194_A4425 from Burkholderia lata (strain ATCC 17760 / DSM 23089 / LMG 22485 / NCIMB 9086 / R18194 / 383).